Consider the following 909-residue polypeptide: UPF0182 protein Moth_1139 (909 aa).

7 helical membrane-spanning segments follow: residues 8 to 28 (FCLL…SHFL), 51 to 71 (VGIR…NLLF), 103 to 123 (LGIL…PLAA), 165 to 185 (LLIT…FIFN), 201 to 221 (LVHF…GFRL), 245 to 265 (LLPG…IIVL), and 277 to 297 (AGIL…PLAV). The interval 843 to 862 (PAPAASPQPPSQAATGSPGN) is disordered.

It belongs to the UPF0182 family.

It is found in the cell membrane. This is UPF0182 protein Moth_1139 from Moorella thermoacetica (strain ATCC 39073 / JCM 9320).